A 912-amino-acid polypeptide reads, in one-letter code: Protein translocase subunit SecA (912 aa).

Residues Gln87, 105-109, and Asp512 each bind ATP; that span reads GEGKT. The Zn(2+) site is built by Cys896, Cys898, Cys907, and His908.

The protein belongs to the SecA family. Monomer and homodimer. Part of the essential Sec protein translocation apparatus which comprises SecA, SecYEG and auxiliary proteins SecDF-YajC and YidC. The cofactor is Zn(2+).

The protein localises to the cell inner membrane. Its subcellular location is the cytoplasm. It carries out the reaction ATP + H2O + cellular proteinSide 1 = ADP + phosphate + cellular proteinSide 2.. Part of the Sec protein translocase complex. Interacts with the SecYEG preprotein conducting channel. Has a central role in coupling the hydrolysis of ATP to the transfer of proteins into and across the cell membrane, serving both as a receptor for the preprotein-SecB complex and as an ATP-driven molecular motor driving the stepwise translocation of polypeptide chains across the membrane. This chain is Protein translocase subunit SecA, found in Pseudomonas fluorescens (strain Pf0-1).